Reading from the N-terminus, the 142-residue chain is Transcription antitermination protein NusB (142 aa).

This sequence belongs to the NusB family.

Its function is as follows. Involved in transcription antitermination. Required for transcription of ribosomal RNA (rRNA) genes. Binds specifically to the boxA antiterminator sequence of the ribosomal RNA (rrn) operons. The sequence is that of Transcription antitermination protein NusB from Roseiflexus sp. (strain RS-1).